The primary structure comprises 234 residues: Ribonuclease Trv (234 aa).

5 disulfides stabilise this stretch: cysteine 5/cysteine 24, cysteine 13/cysteine 59, cysteine 23/cysteine 125, cysteine 67/cysteine 117, and cysteine 189/cysteine 224. N-linked (GlcNAc...) asparagine glycosylation is present at asparagine 15. Histidine 52 is a catalytic residue. Asparagine 75 carries N-linked (GlcNAc...) asparagine glycosylation. Residues glutamate 110 and histidine 114 contribute to the active site.

This sequence belongs to the RNase T2 family.

It carries out the reaction a ribonucleotidyl-ribonucleotide-RNA + H2O = a 3'-end 3'-phospho-ribonucleotide-RNA + a 5'-end dephospho-ribonucleoside-RNA + H(+). In terms of biological role, this is a base non-specific and adenylic acid preferential ribonuclease. The protein is Ribonuclease Trv of Hypocrea rufa (Trichoderma viride).